A 276-amino-acid polypeptide reads, in one-letter code: Sulfur carrier protein FdhD (276 aa).

Residue Cys-118 is the Cysteine persulfide intermediate of the active site.

The protein belongs to the FdhD family.

The protein localises to the cytoplasm. Functionally, required for formate dehydrogenase (FDH) activity. Acts as a sulfur carrier protein that transfers sulfur from IscS to the molybdenum cofactor prior to its insertion into FDH. The protein is Sulfur carrier protein FdhD of Mycobacterium bovis (strain ATCC BAA-935 / AF2122/97).